Reading from the N-terminus, the 461-residue chain is Decaprenylphosphoryl-beta-D-ribose oxidase (461 aa).

The FAD-binding PCMH-type domain occupies 19–194; the sequence is TAPSVANVLR…MRATIEMTPT (176 aa). FAD-binding positions include 53–63, G117, 122–125, 129–132, I184, and Y415; these read ARGLGRSYGDN, TVGG, and CDIH.

This sequence belongs to the DprE1 family. Monomer. Although forming apparent dimer in crystals, DprE1 does not dimerize appreciably in solution. Interacts with DprE2 to form an epimerase complex.

It localises to the periplasm. The catalysed reaction is trans,octa-cis-decaprenylphospho-beta-D-ribofuranose + FAD + H(+) = trans,octa-cis-decaprenylphospho-beta-D-erythro-pentofuranosid-2-ulose + FADH2. The protein operates within cell wall biogenesis; cell wall polysaccharide biosynthesis. Its activity is regulated as follows. Is inhibited by 8-nitro-benzothiazinones (BTZs) such as BTZ043 and PBTZ169; BTZs are a new class of antimycobacterial agents that kill M.tuberculosis in vitro, ex vivo, and in mouse models of tuberculosis. Is also inhibited by dinitrobenzamide derivatives (DNBs), which thus block formation of both cell-wall lipoarabinomannan and arabinogalactan via inhibition of decaprenyl-phospho-arabinose (DPA) synthesis; DNBs show high activity against intracellular growth of M.tuberculosis inside macrophages, including extensively drug resistant (XDR) strains. BTZs and DNBs are suicide inhibitors that act via covalent modification of DprE1; the essential nitro group of these compounds is reduced by DprE1 to a nitroso group, which then specifically reacts with Cys-387 of DprE1 to form an irreversible semimercaptal adduct. Many other compounds with diverse scaffolds were found to act as either covalent (e.g. nitroquinoxalines, nitroimidazoles) or non-covalent (e.g. the benzothiazole derivative TCA1, the 2-carboxyquinoxaline Ty38C, 8-pyrrole-benzothiazinones, 1,4-azaindoles, pyrazolopyridones, 4-aminoquinolone piperidine amides) DprE1 inhibitors. Component of the DprE1-DprE2 complex that catalyzes the 2-step epimerization of decaprenyl-phospho-ribose (DPR) to decaprenyl-phospho-arabinose (DPA), a key precursor that serves as the arabinose donor required for the synthesis of cell-wall arabinans. DprE1 catalyzes the first step of epimerization, namely FAD-dependent oxidation of the C2' hydroxyl of DPR to yield the keto intermediate decaprenyl-phospho-2'-keto-D-arabinose (DPX). The intermediate DPX is then transferred to DprE2 subunit of the epimerase complex, most probably through a 'substrate channel' at the interface of DprE1-DprE2 complex. Can also use farnesyl-phosphoryl-beta-D-ribofuranose (FPR) as substrate in vitro. Its function is as follows. DprE1 is a highly vulnerable and fully validated tuberculosis drug target. The chain is Decaprenylphosphoryl-beta-D-ribose oxidase from Mycobacterium tuberculosis (strain CDC 1551 / Oshkosh).